Consider the following 29-residue polypeptide: Cyclotide vibi-D (29 aa).

A cross-link (cyclopeptide (Gly-Asn)) is located at residues 1–29 (GLPVCGETCFGGRCNTPGCTCSYPICTRN). 3 disulfides stabilise this stretch: cysteine 5/cysteine 19, cysteine 9/cysteine 21, and cysteine 14/cysteine 26.

In terms of processing, this is a cyclic peptide.

Probably participates in a plant defense mechanism. Has moderate levels of cytotoxic activity, active against a human lymphoma cell line with an IC(50) of &gt;30 uM. This is Cyclotide vibi-D from Viola biflora (Yellow wood violet).